The chain runs to 163 residues: Phosphopantetheine adenylyltransferase (163 aa).

Ser9 serves as a coordination point for substrate. ATP contacts are provided by residues 9–10 and His17; that span reads SF. Positions 41, 73, and 87 each coordinate substrate. ATP is bound by residues 88–90, Glu98, and 123–129; these read GLR and YSYLSSS.

The protein belongs to the bacterial CoaD family. Homohexamer. Requires Mg(2+) as cofactor.

It is found in the cytoplasm. The enzyme catalyses (R)-4'-phosphopantetheine + ATP + H(+) = 3'-dephospho-CoA + diphosphate. The protein operates within cofactor biosynthesis; coenzyme A biosynthesis; CoA from (R)-pantothenate: step 4/5. Reversibly transfers an adenylyl group from ATP to 4'-phosphopantetheine, yielding dephospho-CoA (dPCoA) and pyrophosphate. The sequence is that of Phosphopantetheine adenylyltransferase from Lachnoclostridium phytofermentans (strain ATCC 700394 / DSM 18823 / ISDg) (Clostridium phytofermentans).